The sequence spans 1173 residues: Alpha-mannosidase 2 (1173 aa).

Residues 1–21 are disordered; sequence MPFSSYIGNSRRSSTGGGTGG. The Cytoplasmic segment spans residues 1–50; that stretch reads MPFSSYIGNSRRSSTGGGTGGWGQSLLPTALSKSKLAINRKPRKRTLVVN. Residues 51 to 71 form a helical; Signal-anchor membrane-spanning segment; sequence FIFANFFVIALTVSLLFFLLT. Topologically, residues 72–1173 are lumenal; sequence LFHFGVPGPI…AYKLELRPHK (1102 aa). N-linked (GlcNAc...) asparagine glycosylation occurs at asparagine 106. Zn(2+) contacts are provided by histidine 162 and aspartate 164. Asparagine 262 carries N-linked (GlcNAc...) asparagine glycosylation. Aspartate 276 contacts Zn(2+). The Nucleophile role is filled by aspartate 276. Residue asparagine 467 is glycosylated (N-linked (GlcNAc...) asparagine). Residue histidine 564 coordinates Zn(2+). Asparagine 675, asparagine 772, asparagine 782, asparagine 991, asparagine 1098, and asparagine 1108 each carry an N-linked (GlcNAc...) asparagine glycan.

The protein belongs to the glycosyl hydrolase 38 family. As to quaternary structure, homodimer; disulfide-linked. Interacts with GALT1. The cofactor is Zn(2+). Post-translationally, glycosylated.

Its subcellular location is the golgi apparatus membrane. The enzyme catalyses N(4)-{beta-D-GlcNAc-(1-&gt;2)-alpha-D-Man-(1-&gt;3)-[alpha-D-Man-(1-&gt;3)-[alpha-D-Man-(1-&gt;6)]-alpha-D-Man-(1-&gt;6)]-beta-D-Man-(1-&gt;4)-beta-D-GlcNAc-(1-&gt;4)-beta-D-GlcNAc}-L-asparaginyl-[protein] + 2 H2O = 2 alpha-D-mannopyranose + an N(4)-{beta-D-GlcNAc-(1-&gt;2)-alpha-D-Man-(1-&gt;3)-[alpha-D-Man-(1-&gt;6)]-beta-D-Man-(1-&gt;4)-beta-D-GlcNAc-(1-&gt;4)-beta-D-GlcNAc}-L-asparaginyl-[protein]. It participates in protein modification; protein glycosylation. Inhibited by 1 mM Cu(2+) and by the class II alpha-mannosidase inhibitor swainsonine. Its function is as follows. Catalyzes the first committed step in the biosynthesis of complex N-glycans. It controls conversion of high mannose to complex N-glycans; the final hydrolytic step in the N-glycan maturation pathway. Converts GlcNAcMan(5)GlcNAc(2) (Man5Gn) into GlcNAcMan(3)GlcNAc(2) (MGn) by sequential removal of two alpha1,6- and alpha1,3-linked mannose residues from the alpha1,6-mannose branch of the substrate. To a lesser extent, also able to cleave beta1,2-xylosylated Man5Gn-glycopeptide (Man5GnX-GP) and pyridylaminated substrates Man5Gn-PA and Man5GnX-PA, but not active toward Man5-glycopeptide. Required for resistance to salt stress. The polypeptide is Alpha-mannosidase 2 (Arabidopsis thaliana (Mouse-ear cress)).